Here is a 457-residue protein sequence, read N- to C-terminus: Glutamate--tRNA ligase 2 (457 aa).

Residues 9–19 carry the 'HIGH' region motif; the sequence is PSPTGRIHIGN. The short motif at 250-254 is the 'KMSKS' region element; the sequence is GLSKR. An ATP-binding site is contributed by Lys253.

The protein belongs to the class-I aminoacyl-tRNA synthetase family. Glutamate--tRNA ligase type 1 subfamily. In terms of assembly, monomer.

It is found in the cytoplasm. The catalysed reaction is tRNA(Glu) + L-glutamate + ATP = L-glutamyl-tRNA(Glu) + AMP + diphosphate. Catalyzes the attachment of glutamate to tRNA(Glu) in a two-step reaction: glutamate is first activated by ATP to form Glu-AMP and then transferred to the acceptor end of tRNA(Glu). The sequence is that of Glutamate--tRNA ligase 2 from Mesorhizobium japonicum (strain LMG 29417 / CECT 9101 / MAFF 303099) (Mesorhizobium loti (strain MAFF 303099)).